Here is a 716-residue protein sequence, read N- to C-terminus: DNA ligase (716 aa).

Residues 49–53 (DAAYD), 98–99 (SL), and Glu132 each bind NAD(+). The N6-AMP-lysine intermediate role is filled by Lys134. The NAD(+) site is built by Arg155, Glu192, Lys308, and Lys332. Residues Cys437, Cys439, Cys461, and Cys467 each coordinate Zn(2+). In terms of domain architecture, BRCT spans 638–716 (KRNSPIATKT…EDEWLQLIGE (79 aa)).

Belongs to the NAD-dependent DNA ligase family. LigA subfamily. Requires Mg(2+) as cofactor. Mn(2+) serves as cofactor.

The catalysed reaction is NAD(+) + (deoxyribonucleotide)n-3'-hydroxyl + 5'-phospho-(deoxyribonucleotide)m = (deoxyribonucleotide)n+m + AMP + beta-nicotinamide D-nucleotide.. Functionally, DNA ligase that catalyzes the formation of phosphodiester linkages between 5'-phosphoryl and 3'-hydroxyl groups in double-stranded DNA using NAD as a coenzyme and as the energy source for the reaction. It is essential for DNA replication and repair of damaged DNA. This chain is DNA ligase, found in Bradyrhizobium sp. (strain ORS 278).